We begin with the raw amino-acid sequence, 299 residues long: Small ribosomal subunit protein uS2 (299 aa).

The disordered stretch occupies residues Ala-210–Ser-299. Residues Trp-275–Pro-285 are compositionally biased toward polar residues.

It belongs to the universal ribosomal protein uS2 family. In terms of assembly, component of the small ribosomal subunit. Mature ribosomes consist of a small (40S) and a large (60S) subunit. The 40S subunit contains about 33 different proteins and 1 molecule of RNA (18S). The 60S subunit contains about 49 different proteins and 3 molecules of RNA (28S, 5.8S and 5S). Interacts with ribosomal protein S21.

The protein localises to the cytoplasm. Its function is as follows. Required for the assembly and/or stability of the 40S ribosomal subunit. Required for the processing of the 20S rRNA-precursor to mature 18S rRNA in a late step of the maturation of 40S ribosomal subunits. The sequence is that of Small ribosomal subunit protein uS2 from Ornithodoros parkeri (Soft tick).